The primary structure comprises 216 residues: 3-isopropylmalate dehydratase small subunit (216 aa).

This sequence belongs to the LeuD family. LeuD type 1 subfamily. Heterodimer of LeuC and LeuD.

It carries out the reaction (2R,3S)-3-isopropylmalate = (2S)-2-isopropylmalate. It participates in amino-acid biosynthesis; L-leucine biosynthesis; L-leucine from 3-methyl-2-oxobutanoate: step 2/4. Its function is as follows. Catalyzes the isomerization between 2-isopropylmalate and 3-isopropylmalate, via the formation of 2-isopropylmaleate. This Ralstonia nicotianae (strain ATCC BAA-1114 / GMI1000) (Ralstonia solanacearum) protein is 3-isopropylmalate dehydratase small subunit.